The following is a 385-amino-acid chain: 8-amino-7-oxononanoate synthase (385 aa).

A substrate-binding site is contributed by R21. 108 to 109 is a binding site for pyridoxal 5'-phosphate; sequence GF. Residue H133 coordinates substrate. Pyridoxal 5'-phosphate is bound by residues S179, H207, and T233. K236 is subject to N6-(pyridoxal phosphate)lysine. Position 352 (T352) interacts with substrate.

This sequence belongs to the class-II pyridoxal-phosphate-dependent aminotransferase family. BioF subfamily. In terms of assembly, homodimer. The cofactor is pyridoxal 5'-phosphate.

The enzyme catalyses 6-carboxyhexanoyl-[ACP] + L-alanine + H(+) = (8S)-8-amino-7-oxononanoate + holo-[ACP] + CO2. It functions in the pathway cofactor biosynthesis; biotin biosynthesis. Its function is as follows. Catalyzes the decarboxylative condensation of pimeloyl-[acyl-carrier protein] and L-alanine to produce 8-amino-7-oxononanoate (AON), [acyl-carrier protein], and carbon dioxide. The chain is 8-amino-7-oxononanoate synthase from Pseudescherichia vulneris (Escherichia vulneris).